A 153-amino-acid polypeptide reads, in one-letter code: Transcriptional repressor NrdR (153 aa).

A zinc finger lies at 3–34 (CPFCNNISTNVKDSRSIEDDMLIRRRRVCPVC). The region spanning 49–139 (LMVIKKNGGL…VYMNFKNIND (91 aa)) is the ATP-cone domain.

This sequence belongs to the NrdR family. Zn(2+) is required as a cofactor.

Negatively regulates transcription of bacterial ribonucleotide reductase nrd genes and operons by binding to NrdR-boxes. In Ehrlichia ruminantium (strain Gardel), this protein is Transcriptional repressor NrdR.